A 319-amino-acid polypeptide reads, in one-letter code: Cell division protein PomZ (319 aa).

61-68 (KGGTGKTS) provides a ligand contact to ATP.

This sequence belongs to the ParA family. In terms of assembly, interacts with FtsZ in pull-down experiments.

The protein localises to the cytoplasm. Functionally, spatial regulator of cell division that is involved in identifying the incipient division site, recruiting FtsZ to the division site and stabilizing the Z-ring. Binds ATP and GTP. The sequence is that of Cell division protein PomZ from Myxococcus xanthus (strain DK1622).